The sequence spans 61 residues: UPF0391 membrane protein Ajs_0703 (61 aa).

Helical transmembrane passes span 5–25 (AIIF…GVAA) and 33–53 (VLFV…LLGI).

This sequence belongs to the UPF0391 family.

The protein localises to the cell membrane. This is UPF0391 membrane protein Ajs_0703 from Acidovorax sp. (strain JS42).